We begin with the raw amino-acid sequence, 273 residues long: Putative phosphoenolpyruvate synthase regulatory protein (273 aa).

Gly-153–Thr-160 is an ADP binding site.

The protein belongs to the pyruvate, phosphate/water dikinase regulatory protein family. PSRP subfamily.

The enzyme catalyses [pyruvate, water dikinase] + ADP = [pyruvate, water dikinase]-phosphate + AMP + H(+). It catalyses the reaction [pyruvate, water dikinase]-phosphate + phosphate + H(+) = [pyruvate, water dikinase] + diphosphate. In terms of biological role, bifunctional serine/threonine kinase and phosphorylase involved in the regulation of the phosphoenolpyruvate synthase (PEPS) by catalyzing its phosphorylation/dephosphorylation. The protein is Putative phosphoenolpyruvate synthase regulatory protein of Delftia acidovorans (strain DSM 14801 / SPH-1).